A 74-amino-acid chain; its full sequence is Small ribosomal subunit protein bS18 (74 aa).

It belongs to the bacterial ribosomal protein bS18 family. Part of the 30S ribosomal subunit. Forms a tight heterodimer with protein bS6.

In terms of biological role, binds as a heterodimer with protein bS6 to the central domain of the 16S rRNA, where it helps stabilize the platform of the 30S subunit. The chain is Small ribosomal subunit protein bS18 from Novosphingobium aromaticivorans (strain ATCC 700278 / DSM 12444 / CCUG 56034 / CIP 105152 / NBRC 16084 / F199).